A 559-amino-acid polypeptide reads, in one-letter code: MSSDLKRHSRTITDGRTRAGARAMLKAIGFTDEDLAKPIIGIANTWIETMPCNINLRALAARVKEGVRAAGGTPMEFNTVAISDGVTMGTEGMKASLISRDLIADSIELMGRGYMFDAIIALVACDKTIPGAAMGLTRLNVPGFLLYGGSIAPGHWRGKEITIQHVYEAIGAVAAGKMTDEELKEIEDAACPGPGACGGQYTANTMATVMEIIGLSPIGTAAVPAADPRKDSVGYRAGQLIMDVLRRDLKPRDILTRAAFENAIASVALTGGSTNAVLHLLALAREAGVPLTLDDFDTISRRTPLCCDLMPSGKYSAIHVDQAGGIQVIAKRLVDGGFAHGDAITVTGRTLAEEAADAVETPGQDVIRPLDNPIKPTGGLLVLRGNLAPEGSVVKLFGYERTYHRGPARVFDSEEAAMAAIVGGEIRPDDIVVIRYEGPRGGPGMREMLGVTSAIVGAGLGQSVSLVTDGRFSGATRGVMIGHVAPEAARGGPLAIVQEGDEIEINLDERRVDLVLSEEEIADRLLAWQPPAPRFEWGVMARYSALVSSASEGAVLVTP.

Residue Cys52 coordinates [2Fe-2S] cluster. Asp84 provides a ligand contact to Mg(2+). [2Fe-2S] cluster is bound at residue Cys125. The Mg(2+) site is built by Asp126 and Lys127. Lys127 carries the post-translational modification N6-carboxylysine. Cys197 is a [2Fe-2S] cluster binding site. Glu447 contributes to the Mg(2+) binding site. The Proton acceptor role is filled by Ser473.

This sequence belongs to the IlvD/Edd family. As to quaternary structure, homodimer. Requires [2Fe-2S] cluster as cofactor. Mg(2+) serves as cofactor.

It carries out the reaction (2R)-2,3-dihydroxy-3-methylbutanoate = 3-methyl-2-oxobutanoate + H2O. It catalyses the reaction (2R,3R)-2,3-dihydroxy-3-methylpentanoate = (S)-3-methyl-2-oxopentanoate + H2O. Its pathway is amino-acid biosynthesis; L-isoleucine biosynthesis; L-isoleucine from 2-oxobutanoate: step 3/4. It functions in the pathway amino-acid biosynthesis; L-valine biosynthesis; L-valine from pyruvate: step 3/4. Functionally, functions in the biosynthesis of branched-chain amino acids. Catalyzes the dehydration of (2R,3R)-2,3-dihydroxy-3-methylpentanoate (2,3-dihydroxy-3-methylvalerate) into 2-oxo-3-methylpentanoate (2-oxo-3-methylvalerate) and of (2R)-2,3-dihydroxy-3-methylbutanoate (2,3-dihydroxyisovalerate) into 2-oxo-3-methylbutanoate (2-oxoisovalerate), the penultimate precursor to L-isoleucine and L-valine, respectively. This chain is Dihydroxy-acid dehydratase, found in Roseiflexus castenholzii (strain DSM 13941 / HLO8).